The following is a 501-amino-acid chain: Arabinose import ATP-binding protein AraG (501 aa).

2 ABC transporter domains span residues 4-239 (LEFN…MVGR) and 252-495 (LGDN…LPDK). An ATP-binding site is contributed by 36-43 (GENGAGKS).

Belongs to the ABC transporter superfamily. Arabinose importer (TC 3.A.1.2.2) family. In terms of assembly, the complex is composed of two ATP-binding proteins (AraG), two transmembrane proteins (AraH) and a solute-binding protein (AraF).

It localises to the cell inner membrane. It catalyses the reaction L-arabinose(out) + ATP + H2O = L-arabinose(in) + ADP + phosphate + H(+). Its function is as follows. Part of the ABC transporter complex AraFGH involved in arabinose import. Responsible for energy coupling to the transport system. The protein is Arabinose import ATP-binding protein AraG of Rhizobium etli (strain ATCC 51251 / DSM 11541 / JCM 21823 / NBRC 15573 / CFN 42).